A 552-amino-acid chain; its full sequence is Scavenger receptor class B member 1 (552 aa).

The Cytoplasmic segment spans residues 1-11 (MGCSAKARWAA). A helical transmembrane segment spans residues 12–32 (GALGVAGLLCAVLGAVMIVMV). At 33-443 (PSLIKQQVLK…LVLMPKVMHY (411 aa)) the chain is on the extracellular side. N-linked (GlcNAc...) asparagine glycans are attached at residues N102, N108, N173, N212, N227, N255, N310, N330, and N383. A disulfide bridge links C251 with C384. Residues Y393 and V458 each carry the phosphoserine modification. The helical transmembrane segment at 444–464 (AQYVLLALGCVLLLVPVICQI) threads the bilayer. C462 is lipidated: S-palmitoyl cysteine. Residues 465–552 (RSQVGAGQRA…GPSLGGGTGS (88 aa)) lie on the Cytoplasmic side of the membrane. Residue T493 is modified to Phosphoserine.

Belongs to the CD36 family. In terms of assembly, the C-terminal region binds to PDZK1. (Microbial infection) Interacts with hepatitis C virus E1:E2 glycoproteins. Post-translationally, N-glycosylated. In terms of processing, the six cysteines of the extracellular domain are all involved in intramolecular disulfide bonds. As to expression, widely expressed.

It localises to the cell membrane. Its subcellular location is the membrane. It is found in the caveola. Functionally, receptor for different ligands such as phospholipids, cholesterol ester, lipoproteins, phosphatidylserine and apoptotic cells. Receptor for HDL, mediating selective uptake of cholesteryl ether and HDL-dependent cholesterol efflux. Also facilitates the flux of free and esterified cholesterol between the cell surface and apoB-containing lipoproteins and modified lipoproteins, although less efficiently than HDL. May be involved in the phagocytosis of apoptotic cells, via its phosphatidylserine binding activity. Its function is as follows. (Microbial infection) Acts as a receptor for hepatitis C virus in hepatocytes and appears to facilitate its cell entry. Binding between SCARB1 and the hepatitis C virus glycoprotein E2 is independent of the genotype of the viral isolate. (Microbial infection) Mediates uptake of M.fortuitum, E.coli and S.aureus. In terms of biological role, (Microbial infection) Facilitates the entry of human coronavirus SARS-CoV-2 by acting as an entry cofactor through HDL binding. The sequence is that of Scavenger receptor class B member 1 (SCARB1) from Homo sapiens (Human).